A 388-amino-acid polypeptide reads, in one-letter code: Arrestin-C (388 aa).

Belongs to the arrestin family. In terms of assembly, homodimer; disulfide-linked in response to retinal illumination. Interacts with CXCR4; the interaction is dependent on the C-terminal phosphorylation of CXCR4 and modulates the calcium ion mobilization activity of CXCR4. Interacts with GPR84. Inner and outer segments, and the inner plexiform regions of the retina.

It localises to the photoreceptor inner segment. It is found in the cell projection. Its subcellular location is the cilium. The protein resides in the photoreceptor outer segment. In terms of biological role, may play a role in an as yet undefined retina-specific signal transduction. Could bind to photoactivated-phosphorylated red/green opsins. The protein is Arrestin-C (ARR3) of Homo sapiens (Human).